We begin with the raw amino-acid sequence, 131 residues long: MSWQAYVDDHLMCDIDGNRLTAAAILGQDGSVWSQSATFPAFRLEEIAAILKDFDQPGTLAPTGLFLGGTKYMVIQGEAGAVIRGKKGSGGIIVKKTNQALIIGIYDEPLTPGQCNMIVERLGDYLIEQGL.

Belongs to the profilin family. Occurs in many kinds of cells as a complex with monomeric actin in a 1:1 ratio.

The protein resides in the cytoplasm. Its subcellular location is the cytoskeleton. Binds to actin and affects the structure of the cytoskeleton. At high concentrations, profilin prevents the polymerization of actin, whereas it enhances it at low concentrations. By binding to PIP2, it inhibits the formation of IP3 and DG. In Citrus sinensis (Sweet orange), this protein is Profilin.